A 313-amino-acid polypeptide reads, in one-letter code: Acetaldehyde dehydrogenase (313 aa).

Position 13–16 (13–16) interacts with NAD(+); that stretch reads SGNI. The active-site Acyl-thioester intermediate is Cys133. NAD(+) is bound by residues 164–172 and Asn291; that span reads SAGPGTRAN.

The protein belongs to the acetaldehyde dehydrogenase family.

The catalysed reaction is acetaldehyde + NAD(+) + CoA = acetyl-CoA + NADH + H(+). This chain is Acetaldehyde dehydrogenase, found in Cupriavidus pinatubonensis (strain JMP 134 / LMG 1197) (Cupriavidus necator (strain JMP 134)).